The primary structure comprises 204 residues: Guanylate kinase (204 aa).

The Guanylate kinase-like domain occupies 6 to 184 (GLLIVLSGPA…AVDRIKAIVT (179 aa)). 13–20 (GPAGVGKG) is a binding site for ATP.

This sequence belongs to the guanylate kinase family.

It localises to the cytoplasm. The enzyme catalyses GMP + ATP = GDP + ADP. Essential for recycling GMP and indirectly, cGMP. The protein is Guanylate kinase (gmk) of Halalkalibacterium halodurans (strain ATCC BAA-125 / DSM 18197 / FERM 7344 / JCM 9153 / C-125) (Bacillus halodurans).